Reading from the N-terminus, the 599-residue chain is Elongation factor 4 (599 aa).

One can recognise a tr-type G domain in the interval 5–187 (STIRNFAIIA…AIVHRLPAPV (183 aa)). GTP contacts are provided by residues 17–22 (DHGKST) and 134–137 (NKAD).

This sequence belongs to the TRAFAC class translation factor GTPase superfamily. Classic translation factor GTPase family. LepA subfamily.

It is found in the cell inner membrane. It carries out the reaction GTP + H2O = GDP + phosphate + H(+). In terms of biological role, required for accurate and efficient protein synthesis under certain stress conditions. May act as a fidelity factor of the translation reaction, by catalyzing a one-codon backward translocation of tRNAs on improperly translocated ribosomes. Back-translocation proceeds from a post-translocation (POST) complex to a pre-translocation (PRE) complex, thus giving elongation factor G a second chance to translocate the tRNAs correctly. Binds to ribosomes in a GTP-dependent manner. The sequence is that of Elongation factor 4 from Anaplasma marginale (strain Florida).